The primary structure comprises 165 residues: NADPH-dependent 7-cyano-7-deazaguanine reductase (165 aa).

Cys56 serves as the catalytic Thioimide intermediate. Catalysis depends on Asp63, which acts as the Proton donor. Substrate is bound by residues 78-80 (VES) and 97-98 (HE).

It belongs to the GTP cyclohydrolase I family. QueF type 1 subfamily.

It localises to the cytoplasm. The catalysed reaction is 7-aminomethyl-7-carbaguanine + 2 NADP(+) = 7-cyano-7-deazaguanine + 2 NADPH + 3 H(+). It functions in the pathway tRNA modification; tRNA-queuosine biosynthesis. Its function is as follows. Catalyzes the NADPH-dependent reduction of 7-cyano-7-deazaguanine (preQ0) to 7-aminomethyl-7-deazaguanine (preQ1). This Bacillus pumilus (strain SAFR-032) protein is NADPH-dependent 7-cyano-7-deazaguanine reductase.